The following is a 250-amino-acid chain: Putative HTH-type transcriptional regulatory protein PAE1627 (250 aa).

Residues 129 to 183 form the HTH cro/C1-type domain; it reads LRAKRQQAGLSLGTLATNLGVTRETVYRYERGEIEAPLKIAEKLINMFGEDITKK. A DNA-binding region (H-T-H motif) is located at residues 140–159; it reads LGTLATNLGVTRETVYRYER.

The sequence is that of Putative HTH-type transcriptional regulatory protein PAE1627 from Pyrobaculum aerophilum (strain ATCC 51768 / DSM 7523 / JCM 9630 / CIP 104966 / NBRC 100827 / IM2).